The chain runs to 418 residues: MYGTNLLETMGKPTAGHLGMAVTFTPKAYRELHEKYAAPFTNRALLQQQDILRVHVDKLITALRAKARNKESVNMGEWSPHTQPDTYTTFDIIGDICFAEPFGCLDGGESNEWARAIINIFKAATWDQAIRRVAGTGTLLHKALVKIIIPAEAAQWRTIHFSNSKAKTLARLADPDRQHPDLIKHILDSEDSRAALSPTEIILNMVLFISAGSETTANTMTGWTYFMLRHPEARARATAEVRAAFASPRDIKWETVRALPYLNATLEEALRLFSPAPSNQPRVVPACGAVVAGCPLPSGTTVSVAPWAAVFSARNFADPERFAPERWLDEGGADPRYAADRRGASQPFSTGPRGCMGKNLAYFELRLVLAHLLWHFDLEPTDSAAGRECMRRWEQTDMDTYQTWMKPDLWVDLKEAQR.

C355 is a binding site for heme.

This sequence belongs to the cytochrome P450 family. Heme is required as a cofactor.

Its pathway is hormone biosynthesis. Functionally, cytochrome P450 monooxygenase involved in the biosynthesis of abscisic acid (ABA), a phytohormone that acts antagonistically toward salicylic acid (SA), jasmonic acid (JA) and ethylene (ETH) signaling, to impede plant defense responses. During pathogen-host interaction, ABA plays a dual role in disease severity by increasing plant susceptibility and accelerating pathogenesis in the fungus itself. The first step of the pathway catalyzes the reaction from farnesyl diphosphate to alpha-ionylideneethane performed by the alpha-ionylideneethane synthase ABA3 via a three-step reaction mechanism involving 2 neutral intermediates, beta-farnesene and allofarnesene. The cytochrome P450 monooxygenase ABA1 might then be involved in the conversion of alpha-ionylideneethane to alpha-ionylideneacetic acid. Alpha-ionylideneacetic acid is further converted to abscisic acid in 2 steps involving the cytochrome P450 monooxygenase ABA2 and the short-chain dehydrogenase/reductase ABA4, via the intermediates 1'-deoxy-ABA or 1',4'-trans-diol-ABA, depending on the order of action of these 2 enzymes. ABA2 is responsible for the hydroxylation of carbon atom C-1' and ABA4 might be involved in the oxidation of the C-4' carbon atom. The protein is Cytochrome P450 monooxygenase ABA2 of Pyricularia oryzae (strain Y34) (Rice blast fungus).